The primary structure comprises 485 residues: Metalloprotease AprA (485 aa).

Histidine 187 lines the Zn(2+) pocket. The active site involves glutamate 188. Zn(2+)-binding residues include histidine 191 and histidine 197. Positions 268, 270, 272, 300, 302, 303, 305, 342, 344, 349, 351, 353, 358, 360, 362, 366, 367, 368, 369, 371, 375, 376, 377, 378, 380, 384, 385, 386, 387, 389, 398, 405, 415, 461, 463, 465, 467, and 469 each coordinate Ca(2+). Hemolysin-type calcium-binding repeat units follow at residues 347-364 (FGGS…ANVL), 365-382 (KGGA…ADQL), and 383-395 (WGGT…VFGA).

Belongs to the peptidase M10B family. Requires Ca(2+) as cofactor. Zn(2+) serves as cofactor.

The protein resides in the secreted. Secreted protease which is important for P.entomophila to counteract the local immune response of Drosophila. Can degrade antimicrobial peptides (AMPs), e.g. Diptericin and Cecropin A. Thus, protects P.entomophila from the Drosophila antimicrobial peptides produced by the gut innate immune response, and promotes bacterial persistence in the Drosophila gut and killing of the host. Is responsible for maturation of pro-Monalysin to the active toxin Monalysin, by cleaving its N-terminus. The sequence is that of Metalloprotease AprA from Pseudomonas entomophila (strain L48).